The sequence spans 172 residues: Large ribosomal subunit protein eL20A (172 aa).

Ser32 carries the post-translational modification Phosphoserine. Glycyl lysine isopeptide (Lys-Gly) (interchain with G-Cter in ubiquitin) cross-links involve residues Lys125, Lys131, and Lys149.

This sequence belongs to the eukaryotic ribosomal protein eL20 family. In terms of assembly, component of the large ribosomal subunit (LSU). Mature yeast ribosomes consist of a small (40S) and a large (60S) subunit. The 40S small subunit contains 1 molecule of ribosomal RNA (18S rRNA) and 33 different proteins (encoded by 57 genes). The large 60S subunit contains 3 rRNA molecules (25S, 5.8S and 5S rRNA) and 46 different proteins (encoded by 81 genes). eL20 forms multiple interactions with RNA and proteins in the central protuberance, connecting components of core functional centers that are located far apart.

Its subcellular location is the cytoplasm. Functionally, component of the ribosome, a large ribonucleoprotein complex responsible for the synthesis of proteins in the cell. The small ribosomal subunit (SSU) binds messenger RNAs (mRNAs) and translates the encoded message by selecting cognate aminoacyl-transfer RNA (tRNA) molecules. The large subunit (LSU) contains the ribosomal catalytic site termed the peptidyl transferase center (PTC), which catalyzes the formation of peptide bonds, thereby polymerizing the amino acids delivered by tRNAs into a polypeptide chain. The nascent polypeptides leave the ribosome through a tunnel in the LSU and interact with protein factors that function in enzymatic processing, targeting, and the membrane insertion of nascent chains at the exit of the ribosomal tunnel. The polypeptide is Large ribosomal subunit protein eL20A (Saccharomyces cerevisiae (strain ATCC 204508 / S288c) (Baker's yeast)).